The sequence spans 133 residues: FK506-binding protein 2 (133 aa).

The N-terminal stretch at 1–20 (MKLLYCLLLVILALVGLSSG) is a signal peptide. The PPIase FKBP-type domain maps to 45-133 (GDKLKIHYTG…IFDVELIGIN (89 aa)).

The protein belongs to the FKBP-type PPIase family.

It catalyses the reaction [protein]-peptidylproline (omega=180) = [protein]-peptidylproline (omega=0). Its activity is regulated as follows. Inhibited by both FK506 and rapamycin. PPIases accelerate the folding of proteins by catalyzing the cis-trans isomerization of proline imidic peptide bonds in oligopeptides. The polypeptide is FK506-binding protein 2 (fkbp2) (Dictyostelium discoideum (Social amoeba)).